We begin with the raw amino-acid sequence, 418 residues long: MTLLALGINHKTAPVSLRERVSFSPDKLDQALDSLLAQPMVQGGVVLSTCNRTELYLSVEERDDLQEALIRWLCDYHNLNEDDLRNSLYWHQDNDAVSHLMRVASGLDSLVLGEPQILGQVKKAFADSQKGHMKASELERMFQKSFSVAKRVRTETDIGASAVSVAFAACTLARQIFESLSTVTVLLVGAGETIELVARHLREHKVQKMIIANRTRERAQILADEVGAEVIALSDIDERLREADIIISSTASPLPIIGKGMVERALKSRRNQPMLLVDIAVPRDVEPEVGKLANAYLYSVDDLQSIISHNLAQRKAAAVEAETIVAQETSEFMAWLRAQSASETIREYRSQAEHVRDELTAKALAALEQGGDAQAIMQDLAWKLTNRLIHAPTKSLQQAARDGDNERLNILRDSLGLE.

Substrate-binding positions include 49-52 (TCNR), Ser-109, 114-116 (EPQ), and Gln-120. Cys-50 (nucleophile) is an active-site residue. Residue 189-194 (GAGETI) participates in NADP(+) binding.

This sequence belongs to the glutamyl-tRNA reductase family. Homodimer.

The catalysed reaction is (S)-4-amino-5-oxopentanoate + tRNA(Glu) + NADP(+) = L-glutamyl-tRNA(Glu) + NADPH + H(+). It functions in the pathway porphyrin-containing compound metabolism; protoporphyrin-IX biosynthesis; 5-aminolevulinate from L-glutamyl-tRNA(Glu): step 1/2. Functionally, catalyzes the NADPH-dependent reduction of glutamyl-tRNA(Glu) to glutamate 1-semialdehyde (GSA). The protein is Glutamyl-tRNA reductase of Escherichia coli O7:K1 (strain IAI39 / ExPEC).